The primary structure comprises 185 residues: Isopentenyl-diphosphate Delta-isomerase (185 aa).

Mn(2+) contacts are provided by His-27 and His-34. The Nudix hydrolase domain occupies 32 to 168; that stretch reads PLHLAFSCHL…PWAFSPWLTL (137 aa). Cys-69 is a catalytic residue. Cys-69 lines the Mg(2+) pocket. His-71 lines the Mn(2+) pocket. A Mg(2+)-binding site is contributed by Glu-89. 2 residues coordinate Mn(2+): Glu-118 and Glu-120. Glu-120 is a catalytic residue.

It belongs to the IPP isomerase type 1 family. Requires Mg(2+) as cofactor. Mn(2+) serves as cofactor.

It is found in the cytoplasm. The catalysed reaction is isopentenyl diphosphate = dimethylallyl diphosphate. The protein operates within isoprenoid biosynthesis; dimethylallyl diphosphate biosynthesis; dimethylallyl diphosphate from isopentenyl diphosphate: step 1/1. Its function is as follows. Catalyzes the 1,3-allylic rearrangement of the homoallylic substrate isopentenyl (IPP) to its highly electrophilic allylic isomer, dimethylallyl diphosphate (DMAPP). This chain is Isopentenyl-diphosphate Delta-isomerase, found in Leifsonia xyli subsp. xyli (strain CTCB07).